We begin with the raw amino-acid sequence, 88 residues long: MEWYMGKYIRPLSDAVFTIASDDLWIESLAIQQLHTTANLPNMQRVVGMPDLHPGRGYPIGAAFFSVGRFYPTRRRGNGAGNRNGPLL.

This is an uncharacterized protein from Escherichia coli O157:H7.